Reading from the N-terminus, the 283-residue chain is Thymidylate synthase (283 aa).

Arginine 22 serves as a coordination point for dUMP. The active-site Nucleophile is cysteine 160. DUMP is bound by residues 180–183 (RSCD), asparagine 191, and 221–223 (HIY). A (6R)-5,10-methylene-5,6,7,8-tetrahydrofolate-binding site is contributed by aspartate 183. (6R)-5,10-methylene-5,6,7,8-tetrahydrofolate is bound at residue serine 282.

This sequence belongs to the thymidylate synthase family. Bacterial-type ThyA subfamily. In terms of assembly, homodimer.

Its subcellular location is the cytoplasm. It catalyses the reaction dUMP + (6R)-5,10-methylene-5,6,7,8-tetrahydrofolate = 7,8-dihydrofolate + dTMP. It functions in the pathway pyrimidine metabolism; dTTP biosynthesis. Functionally, catalyzes the reductive methylation of 2'-deoxyuridine-5'-monophosphate (dUMP) to 2'-deoxythymidine-5'-monophosphate (dTMP) while utilizing 5,10-methylenetetrahydrofolate (mTHF) as the methyl donor and reductant in the reaction, yielding dihydrofolate (DHF) as a by-product. This enzymatic reaction provides an intracellular de novo source of dTMP, an essential precursor for DNA biosynthesis. This Vibrio atlanticus (strain LGP32) (Vibrio splendidus (strain Mel32)) protein is Thymidylate synthase.